We begin with the raw amino-acid sequence, 217 residues long: Probable glutathione S-transferase (217 aa).

A GST N-terminal domain is found at 2–81 (AEVKLLGLRY…YIDEAFEGPS (80 aa)). Glutathione is bound by residues Ser-12, Lys-39, Ile-53, and 65 to 66 (ES). The GST C-terminal domain maps to 86–210 (DPYDRALARF…ELLIRYRAYI (125 aa)).

The protein belongs to the GST superfamily. HSP26 family.

The catalysed reaction is RX + glutathione = an S-substituted glutathione + a halide anion + H(+). The chain is Probable glutathione S-transferase (PRP1) from Solanum tuberosum (Potato).